Consider the following 447-residue polypeptide: UDP-glycosyltransferase 79B9 (447 aa).

UDP-alpha-D-glucose contacts are provided by residues Ser-260, 319 to 321 (VQQ), 336 to 344 (HCGFGSMWE), and 358 to 361 (LCDQ).

It belongs to the UDP-glycosyltransferase family.

This chain is UDP-glycosyltransferase 79B9 (UGT79B9), found in Arabidopsis thaliana (Mouse-ear cress).